Consider the following 59-residue polypeptide: Potassium channel toxin alpha-KTx 15.5 (59 aa).

The N-terminal stretch at 1 to 22 (MKFSSIILLTLLICSMSIFGNC) is a signal peptide. Pyrrolidone carboxylic acid is present on Gln23. 3 cysteine pairs are disulfide-bonded: Cys30-Cys50, Cys35-Cys55, and Cys39-Cys57.

It belongs to the short scorpion toxin superfamily. Potassium channel inhibitor family. Alpha-KTx 15 subfamily. As to expression, expressed by the venom gland.

It localises to the secreted. Blocker of A-type voltage-gated potassium channels of cerebellar granular cells. May also inhibit Kv4/KCND when coexpressed with DPP6 or DPP10. The occlusion of the outer entry of the K(+) conducting pore is partially reversible and affects both open and closed channels. It shares the same target in rat brain than BmTX3 (AC Q8I0L5) and AmmTX3 (AC P60208). The protein is Potassium channel toxin alpha-KTx 15.5 of Androctonus australis (Sahara scorpion).